Consider the following 71-residue polypeptide: Ubiquinol-cytochrome c reductase complex assembly factor 6 (71 aa).

Residues 1-8 (MPAGVPMS) are Mitochondrial matrix-facing. Residues 9–25 (TYLKMLAASLLAMCAGA) form a helical; Signal-anchor for type II membrane protein membrane-spanning segment. At 26 to 71 (EVVHRYYRPDLTIPEIPPKRGELKTELLGLKERKHKPQISQQEELK) the chain is on the mitochondrial intermembrane side. The segment at 52-71 (LLGLKERKHKPQISQQEELK) is disordered.

It belongs to the UQCC6 family. As to quaternary structure, interacts with UQCRC1. Interacts with UQCRQ. Interacts with UQCC5. Forms a complex, named COMB/coordinator of mitochondrial CYTB biogenesis, composed of UQCC1, UQCC2, UQCC4, UQCC5 and UQCC6; stabilizes nascent cytochrome b/MT-CYB and promotes its membrane insertion. Forms a complex, named COMA, composed of UQCC1, UQCC2 and UQCC4; activates MT-CYB translation. Forms a complex, named COMC, composed of UQCC1, UQCC2; UQCC3 and UQCC4; mediates MT-CYB hemylation and association with the first nuclear-encoded complex III subunit UQCRQ. Interacts with MT-CYB.

The protein resides in the mitochondrion inner membrane. Functionally, required for the assembly and stability of the mitochondrial ubiquinol-cytochrome c reductase complex (complex III (CIII) or cytochrome b-c1 complex), a multisubunit transmembrane complex that is part of the mitochondrial electron transport chain (ETC) which drives oxidative phosphorylation. Mediates early complex III biogenesis. Participates in regulating the levels of electron transport chain proteins, and therefore energy supply, in response to changes in energy demand. Also required for cytochrome c oxidase complex (complex IV) assembly. This Pongo abelii (Sumatran orangutan) protein is Ubiquinol-cytochrome c reductase complex assembly factor 6.